A 227-amino-acid chain; its full sequence is MADS-box transcription factor 25 (227 aa).

Residues Met-1–Ser-61 form the MADS-box domain. The 91-residue stretch at Ala-86–Arg-176 folds into the K-box domain. The interval Lys-183–Glu-227 is disordered. Over residues Ser-186–Arg-197 the composition is skewed to polar residues. Over residues Ser-198–Glu-227 the composition is skewed to basic and acidic residues.

Expressed in seedling roots.

The protein resides in the nucleus. Probable transcription factor. This Oryza sativa subsp. japonica (Rice) protein is MADS-box transcription factor 25 (MADS25).